Reading from the N-terminus, the 785-residue chain is B-cell scaffold protein with ankyrin repeats (785 aa).

Residues 1–154 (MLPAAPGKGL…DYISVIQSII (154 aa)) form an interaction with ITPR2 region. One can recognise a TIR domain in the interval 25-153 (NTKDIIMIYE…EDYISVIQSI (129 aa)). Residues 200 to 327 (VLPTEIPCEN…EIPYYEFQSL (128 aa)) form the DBB domain. ANK repeat units lie at residues 342–371 (ELPTLLHCAAKFGLKNLAIHLLQCSGATWA) and 378–408 (EGSDPAHIAERHGHKELKKIFEDFSIQEIDI). 4 disordered regions span residues 433 to 480 (PAFH…SESS), 493 to 514 (GADPENNSQEPLMSSRPPLPPP), 538 to 578 (QMER…EDPY), and 606 to 625 (FIINRPPAPTPRPTSIPPKE). The segment covering 553–568 (ETGDEPKGEKEKKEEE) has biased composition (basic and acidic residues). The segment covering 569-578 (KEQEEEEDPY) has biased composition (acidic residues). A compositionally biased stretch (pro residues) spans 611–621 (PPAPTPRPTSI).

As to quaternary structure, interacts with LYN, ITPR1 and ITPR2. In terms of processing, phosphorylated on tyrosines upon BCR activation. Expressed in B-cell but not T-cell or myeloid cell lines. Highest expression in CD19(+) B-cells, with very low expression in other cell populations.

Functionally, involved in B-cell receptor (BCR)-induced Ca(2+) mobilization from intracellular stores. Promotes Lyn-mediated phosphorylation of IP3 receptors 1 and 2. This chain is B-cell scaffold protein with ankyrin repeats (BANK1), found in Homo sapiens (Human).